A 126-amino-acid chain; its full sequence is Aspartate 1-decarboxylase (126 aa).

Ser25 (schiff-base intermediate with substrate; via pyruvic acid) is an active-site residue. Ser25 carries the post-translational modification Pyruvic acid (Ser). Substrate is bound at residue Thr57. Catalysis depends on Tyr58, which acts as the Proton donor. 73 to 75 (GAA) contributes to the substrate binding site.

The protein belongs to the PanD family. As to quaternary structure, heterooctamer of four alpha and four beta subunits. Pyruvate serves as cofactor. Is synthesized initially as an inactive proenzyme, which is activated by self-cleavage at a specific serine bond to produce a beta-subunit with a hydroxyl group at its C-terminus and an alpha-subunit with a pyruvoyl group at its N-terminus.

It is found in the cytoplasm. It catalyses the reaction L-aspartate + H(+) = beta-alanine + CO2. It functions in the pathway cofactor biosynthesis; (R)-pantothenate biosynthesis; beta-alanine from L-aspartate: step 1/1. Functionally, catalyzes the pyruvoyl-dependent decarboxylation of aspartate to produce beta-alanine. The sequence is that of Aspartate 1-decarboxylase from Methylobacillus flagellatus (strain ATCC 51484 / DSM 6875 / VKM B-1610 / KT).